Reading from the N-terminus, the 250-residue chain is Cell division protein ZapD (250 aa).

The protein belongs to the ZapD family. As to quaternary structure, interacts with FtsZ.

It localises to the cytoplasm. Its function is as follows. Cell division factor that enhances FtsZ-ring assembly. Directly interacts with FtsZ and promotes bundling of FtsZ protofilaments, with a reduction in FtsZ GTPase activity. In Yersinia enterocolitica serotype O:8 / biotype 1B (strain NCTC 13174 / 8081), this protein is Cell division protein ZapD.